The primary structure comprises 440 residues: Argininosuccinate lyase (440 aa).

Belongs to the lyase 1 family. Argininosuccinate lyase subfamily.

It localises to the cytoplasm. It carries out the reaction 2-(N(omega)-L-arginino)succinate = fumarate + L-arginine. It participates in amino-acid biosynthesis; L-arginine biosynthesis; L-arginine from L-ornithine and carbamoyl phosphate: step 3/3. This chain is Argininosuccinate lyase, found in Clostridium botulinum (strain Langeland / NCTC 10281 / Type F).